Here is a 201-residue protein sequence, read N- to C-terminus: Holliday junction branch migration complex subunit RuvA (201 aa).

Residues 1–63 (MYAYIKGKLS…EDAQLLYGFM (63 aa)) are domain I. Residues 64 to 142 (SEEEKGMFLS…ITEENPETLL (79 aa)) are domain II. A flexible linker region spans residues 143 to 153 (NFEGSESNQTS). Positions 153–201 (SPILDEALLALEALGYSKRELNKVEKKLQAESYTSVDEAVKAGLKILVS) are domain III.

Belongs to the RuvA family. Homotetramer. Forms an RuvA(8)-RuvB(12)-Holliday junction (HJ) complex. HJ DNA is sandwiched between 2 RuvA tetramers; dsDNA enters through RuvA and exits via RuvB. An RuvB hexamer assembles on each DNA strand where it exits the tetramer. Each RuvB hexamer is contacted by two RuvA subunits (via domain III) on 2 adjacent RuvB subunits; this complex drives branch migration. In the full resolvosome a probable DNA-RuvA(4)-RuvB(12)-RuvC(2) complex forms which resolves the HJ.

It is found in the cytoplasm. In terms of biological role, the RuvA-RuvB-RuvC complex processes Holliday junction (HJ) DNA during genetic recombination and DNA repair, while the RuvA-RuvB complex plays an important role in the rescue of blocked DNA replication forks via replication fork reversal (RFR). RuvA specifically binds to HJ cruciform DNA, conferring on it an open structure. The RuvB hexamer acts as an ATP-dependent pump, pulling dsDNA into and through the RuvAB complex. HJ branch migration allows RuvC to scan DNA until it finds its consensus sequence, where it cleaves and resolves the cruciform DNA. The polypeptide is Holliday junction branch migration complex subunit RuvA (Staphylococcus carnosus (strain TM300)).